A 601-amino-acid polypeptide reads, in one-letter code: DNA ligase (601 aa).

An ATP-binding site is contributed by Asp-258. Lys-260 (N6-AMP-lysine intermediate) is an active-site residue. Residues Arg-265, Arg-280, Glu-310, Phe-350, Arg-427, and Lys-433 each coordinate ATP.

This sequence belongs to the ATP-dependent DNA ligase family. As to quaternary structure, interacts with the PCNA heterotrimer, probably via subunit PCNA3. The cofactor is a divalent metal cation.

The enzyme catalyses ATP + (deoxyribonucleotide)n-3'-hydroxyl + 5'-phospho-(deoxyribonucleotide)m = (deoxyribonucleotide)n+m + AMP + diphosphate.. With respect to regulation, ligase activity stimulated by PCNA heterotrimer. In terms of biological role, DNA ligase that seals nicks in double-stranded DNA during DNA replication, DNA recombination and DNA repair. Interaction with PCNA enhances ligase activity. DNA polymerase I, DNA ligase and the flap endonuclease may be constitutively associated with the PCNA heterotrimer forming a scanning complex able to couple DNA synthesis and Okazaki fragment maturation. The polypeptide is DNA ligase (Saccharolobus solfataricus (strain ATCC 35092 / DSM 1617 / JCM 11322 / P2) (Sulfolobus solfataricus)).